The following is a 172-amino-acid chain: Centrin-2 (172 aa).

The segment covering 1–14 has biased composition (polar residues); it reads MASNFKKTTMASSA. A disordered region spans residues 1–31; sequence MASNFKKTTMASSAQRKRMSPKPELTEDQKQ. Alanine 2 is modified (N-acetylalanine). Residues 2–25 form a required for self-assembly region; it reads ASNFKKTTMASSAQRKRMSPKPEL. The residue at position 20 (serine 20) is a Phosphoserine. A Glycyl lysine isopeptide (Lys-Gly) (interchain with G-Cter in SUMO2) cross-link involves residue lysine 22. Phosphothreonine is present on threonine 26. 4 EF-hand domains span residues 28-63, 64-99, 101-136, and 137-172; these read DQKQ…LGFE, PKKE…KMSE, DTKE…LGEN, and LTDE…TSLY. The Ca(2+) site is built by aspartate 41, aspartate 43, threonine 45, threonine 47, and glutamate 52. Residues aspartate 150, aspartate 152, aspartate 154, glutamate 156, and glutamate 161 each coordinate Ca(2+).

This sequence belongs to the centrin family. In terms of assembly, monomer. Homooligomer. Interacts with CCP110, SFI1. Component of the XPC complex composed of XPC, RAD23B and CETN2. Component of the nuclear pore complex (NPC)-associated TREX-2 complex (transcription and export complex 2), composed of at least GANP, 2 copies of ENY2, PCID2, SEM1/DSS1, and either centrin CETN2 or centrin CETN3. The TREX-2 complex also associates with ALYREF/ALY and with the nucleoporin NUP153. Interacts with USP49. Forms a microtubule-associated complex with POC5, POC1B and FAM161A. Interacts with CCDC15. Ubiquitously expressed in all adult tissues tested, with strongest expression in brain, spleen, kidney, small intestine and ovary. Also expressed in the NIH 3T3 fibroblast cell line and peripheral blood lymphocytes.

It localises to the cytoplasm. Its subcellular location is the cytoskeleton. The protein resides in the microtubule organizing center. The protein localises to the centrosome. It is found in the centriole. It localises to the nucleus. Its subcellular location is the nucleus envelope. The protein resides in the nuclear pore complex. Functionally, plays a fundamental role in microtubule organizing center structure and function. Required for centriole duplication and correct spindle formation. Has a role in regulating cytokinesis and genome stability via cooperation with CALM1 and CCP110. Its function is as follows. Involved in global genome nucleotide excision repair (GG-NER) by acting as component of the XPC complex. Cooperatively with Rad23b appears to stabilize Xpc. In vitro, stimulates DNA binding of the Xpc:Rad23b dimer. In terms of biological role, the XPC complex is proposed to represent the first factor bound at the sites of DNA damage and together with other core recognition factors, Xpa, RPA and the TFIIH complex, is part of the pre-incision (or initial recognition) complex. The XPC complex recognizes a wide spectrum of damaged DNA characterized by distortions of the DNA helix such as single-stranded loops, mismatched bubbles or single-stranded overhangs. The orientation of XPC complex binding appears to be crucial for inducing a productive NER. XPC complex is proposed to recognize and to interact with unpaired bases on the undamaged DNA strand which is followed by recruitment of the TFIIH complex and subsequent scanning for lesions in the opposite strand in a 5'-to-3' direction by the NER machinery. Cyclobutane pyrimidine dimers (CPDs) which are formed upon UV-induced DNA damage esacpe detection by the XPC complex due to a low degree of structural perurbation. Instead they are detected by the UV-DDB complex which in turn recruits and cooperates with the XPC complex in the respective DNA repair. As a component of the TREX-2 complex, involved in the export of mRNAs to the cytoplasm through the nuclear pores. The polypeptide is Centrin-2 (Cetn2) (Mus musculus (Mouse)).